The sequence spans 274 residues: NH(3)-dependent NAD(+) synthetase (274 aa).

46–53 (GISGGQDS) contacts ATP. Residue Asp52 coordinates Mg(2+). Arg140 is a deamido-NAD(+) binding site. An ATP-binding site is contributed by Thr160. Glu165 contributes to the Mg(2+) binding site. Residues Lys173 and Asp180 each contribute to the deamido-NAD(+) site. ATP-binding residues include Lys189 and Thr211. Residue 260-261 (HK) participates in deamido-NAD(+) binding.

The protein belongs to the NAD synthetase family. Homodimer.

The catalysed reaction is deamido-NAD(+) + NH4(+) + ATP = AMP + diphosphate + NAD(+) + H(+). The protein operates within cofactor biosynthesis; NAD(+) biosynthesis; NAD(+) from deamido-NAD(+) (ammonia route): step 1/1. In terms of biological role, catalyzes the ATP-dependent amidation of deamido-NAD to form NAD. Uses ammonia as a nitrogen source. The polypeptide is NH(3)-dependent NAD(+) synthetase (Listeria monocytogenes serotype 4b (strain CLIP80459)).